Consider the following 90-residue polypeptide: Glycine and tyrosine-rich protein (90 aa).

Positions 1–21 are cleaved as a signal peptide; sequence MRRSVLVVFLVLAVTNVAVEA.

As to expression, prismatic layer of shell (at protein level).

The protein resides in the secreted. This is Glycine and tyrosine-rich protein from Pinctada maxima (Silver-lipped pearl oyster).